The chain runs to 445 residues: ATP synthase subunit b-delta (445 aa).

The tract at residues 1–168 (MSIFIGQLIG…PSSAVLEAGA (168 aa)) is ATP synthase subunit b. The chain crosses the membrane as a helical span at residues 3–23 (IFIGQLIGFAVIVFILVKWVV). The tract at residues 169 to 445 (SLNLRAASRE…LAAARTGLPD (277 aa)) is ATP synthase subunit delta.

It in the N-terminal section; belongs to the ATPase B chain family. This sequence in the C-terminal section; belongs to the ATPase delta chain family. In terms of assembly, F-type ATPases have 2 components, F(1) - the catalytic core - and F(0) - the membrane proton channel. F(1) has five subunits: alpha(3), beta(3), gamma(1), delta(1), epsilon(1). F(0) has three main subunits: a(1), b(2) and c(10-14). The alpha and beta chains form an alternating ring which encloses part of the gamma chain. F(1) is attached to F(0) by a central stalk formed by the gamma and epsilon chains, while a peripheral stalk is formed by the delta and b chains.

It localises to the cell membrane. F(1)F(0) ATP synthase produces ATP from ADP in the presence of a proton or sodium gradient. F-type ATPases consist of two structural domains, F(1) containing the extramembraneous catalytic core and F(0) containing the membrane proton channel, linked together by a central stalk and a peripheral stalk. During catalysis, ATP synthesis in the catalytic domain of F(1) is coupled via a rotary mechanism of the central stalk subunits to proton translocation. Its function is as follows. This fusion protein includes a component of the F(0) channel (subunit b) and of the F(1) subunit (subunit delta). Two copies of subunit b and one of delta together form the peripheral 'stator' stalk which links F(1) to F(0). The protein is ATP synthase subunit b-delta (atpFH) of Mycolicibacterium vanbaalenii (strain DSM 7251 / JCM 13017 / BCRC 16820 / KCTC 9966 / NRRL B-24157 / PYR-1) (Mycobacterium vanbaalenii).